The primary structure comprises 259 residues: MSLHLVIIDALNLIRRVHSAQPDPNDITRTAETTTRTLQRIINEAQPSHMIAVFDHHLSDRGWRAELLPTYKANRKPMPDVLQQGIDAIQDAWWQLGIDSLLSEGDEADDLVATLACKVAAHQEKVTIISTDKGYCQLLSPTLQIRDYFQQRWLDEPFIAQEFGVTPAQLTDYWGLTGVSSSQIPGVAGIGPKAAKEILNQFSSIEEAYASPELPAKYRKKLDPHIEMARICKQVSALKTDIELGFNLQDIRFNSSSAD.

D109 serves as a coordination point for Mg(2+). Positions 165–255 constitute a 5'-3' exonuclease domain; that stretch reads VTPAQLTDYW…FNLQDIRFNS (91 aa). Positions 176, 185, 187, and 190 each coordinate K(+). An interaction with DNA region spans residues 189-194; sequence GIGPKA.

Belongs to the Xni family. It depends on Mg(2+) as a cofactor. K(+) serves as cofactor.

Its function is as follows. Has flap endonuclease activity. During DNA replication, flap endonucleases cleave the 5'-overhanging flap structure that is generated by displacement synthesis when DNA polymerase encounters the 5'-end of a downstream Okazaki fragment. The chain is Flap endonuclease Xni from Vibrio cholerae serotype O1 (strain ATCC 39315 / El Tor Inaba N16961).